The following is a 292-amino-acid chain: Leucine-rich repeat-containing protein 10B (292 aa).

The interval 1–20 is disordered; it reads MGIAESTPDELPSDAEEQLR. Over residues 7-16 the composition is skewed to acidic residues; it reads TPDELPSDAE. LRR repeat units follow at residues 22-43, 45-66, 68-90, 91-112, 114-136, 137-158, 160-181, 183-204, and 205-226; these read GDQQ…VCAL, RLQK…IEEL, ELRI…CRLP, RLTR…FAQL, SLRC…LRLV, ALQS…LPRM, GLRG…LLRM, RLHI…HPLR, and ALRV…ADTV. The disordered stretch occupies residues 236–261; sequence RMAERDEPTPRPPPRRPARAFEDEEE.

In Homo sapiens (Human), this protein is Leucine-rich repeat-containing protein 10B (LRRC10B).